The following is a 1257-amino-acid chain: Stromal processing peptidase, chloroplastic (1257 aa).

A chloroplast-targeting transit peptide spans 1–142 (MAASTSTSSL…ASVKRVQLPH (142 aa)). Histidine 236 serves as a coordination point for Zn(2+). Residue glutamate 239 is the Proton acceptor of the active site. Histidine 240 provides a ligand contact to Zn(2+). Residue glutamate 309 is part of the active site. Glutamate 316 contacts Zn(2+). A disordered region spans residues 1233-1257 (EEAGEGYPGVLPMGRGLSTMTRPTT).

Belongs to the peptidase M16 family. It depends on Zn(2+) as a cofactor.

It localises to the plastid. The protein resides in the chloroplast stroma. Cleaves presequences (transit peptides) from chloroplastic protein precursors. Initially recognizes a precursor by binding to the C-terminus of its transit peptide and then removes the transit peptide in a single endoproteolytic step. In a next step, pursues the cleavage of transit peptide to a subfragment form. This Pisum sativum (Garden pea) protein is Stromal processing peptidase, chloroplastic.